We begin with the raw amino-acid sequence, 1452 residues long: Receptor-type tyrosine-protein phosphatase mu (1452 aa).

Residues 1 to 20 (MRGLGTCLATLAGLLLTAAG) form the signal peptide. Residues 21-742 (ETFSGGCLFD…PEKQTDHTVK (722 aa)) are Extracellular-facing. One can recognise an MAM domain in the interval 22–184 (TFSGGCLFDE…VKVLGHPCTR (163 aa)). A disulfide bridge connects residues Cys-27 and Cys-36. N-linked (GlcNAc...) asparagine glycans are attached at residues Asn-72, Asn-92, Asn-131, and Asn-249. Intrachain disulfides connect Cys-96–Cys-182 and Cys-206–Cys-260. One can recognise an Ig-like C2-type domain in the interval 186–277 (PHFLRIQNVE…VGISNYAELV (92 aa)). Fibronectin type-III domains are found at residues 284-379 (PIAP…CADP), 382-480 (GPRK…TDED), 482-587 (PGAV…SAPS), and 589-671 (PAYE…DSLQ). Residues Asn-406, Asn-414, Asn-454, Asn-534, Asn-544, Asn-598, Asn-651, and Asn-681 are each glycosylated (N-linked (GlcNAc...) asparagine). Residues 743 to 764 (IAGVIAGILLFVIIFLGVVLVM) traverse the membrane as a helical segment. Residues 765 to 1452 (KKRKLAKKRK…EVALEYLNSG (688 aa)) lie on the Cytoplasmic side of the membrane. Ser-821 is modified (phosphoserine). Tyrosine-protein phosphatase domains lie at 900-1154 (FKEE…ILEA) and 1186-1448 (IKEE…ALEY). Substrate is bound by residues Asp-1063, 1095–1101 (CSAGAGR), and Gln-1139. Cys-1095 (phosphocysteine intermediate) is an active-site residue. Cys-1389 functions as the Phosphocysteine intermediate in the catalytic mechanism.

This sequence belongs to the protein-tyrosine phosphatase family. Receptor class 2B subfamily. Homodimer.

It is found in the cell membrane. It carries out the reaction O-phospho-L-tyrosyl-[protein] + H2O = L-tyrosyl-[protein] + phosphate. Functionally, receptor protein-tyrosine phosphatase that mediates homotypic cell-cell interactions and plays a role in adipogenic differentiation via modulation of p120 catenin/CTNND1 phosphorylation. Promotes CTNND1 dephosphorylation and prevents its cytoplasmic localization where it inhibits SLC2A4 membrane trafficking. In turn, SLC2A4 is directed to the plasma membrane and performs its glucose transporter function. This is Receptor-type tyrosine-protein phosphatase mu (PTPRM) from Homo sapiens (Human).